A 640-amino-acid chain; its full sequence is ETV5-related protein Ets96B (640 aa).

A disordered region spans residues 315 to 375 (HADSTTTAAQ…HHGHQQAEQQ (61 aa)). Positions 321-356 (TAAQQQQQQQEQQQQQQQQQQQQQHQQQLQQAAALH) form a coiled coil. Residues 322–355 (AAQQQQQQQEQQQQQQQQQQQQQHQQQLQQAAAL) are compositionally biased toward low complexity. The span at 356–369 (HPHHHHSHHGHHGH) shows a compositional bias: basic residues. The segment at residues 498–579 (LQLWQFLVAL…NGERYVYRFV (82 aa)) is a DNA-binding region (ETS). Residues 609–624 (LAKTPPTSGDSQTQSP) are compositionally biased toward polar residues. Positions 609–628 (LAKTPPTSGDSQTQSPRVAK) are disordered.

It belongs to the ETS family. In the adult brain, expressed almost exclusively in dopaminergic neurons.

Its subcellular location is the nucleus. Functionally, required in dopaminergic neurons to regulate expression of genes involved in dopamine signaling. Decreases expression of the dopamine transporter DAT and increases expression of the dopamine transporter Vmat and the tyrosine 3-monooxygenase ple which is involved in dopamine biosynthesis. Also involved in negatively regulating the expression of a group of endoplasmic reticulum proteins, the molecular chaperone Calr and the protein disulfide isomerases CaBP1 and ERp60. The polypeptide is ETV5-related protein Ets96B (Drosophila melanogaster (Fruit fly)).